Consider the following 185-residue polypeptide: MPQTVLNDMEDRMNKAINALKRDLSSLRAGRANPAMLDRVTVDYYGTPTPISQLANISVPEPRMLTIQPWDKTALKEIDRALQQSDLGISPSNDGVIIRLIIPPLTEERRKELVKLAGKGGEEAKVAIRNIRRDANDEIKKLEKAATISEDDSRRHQETIQKTTDKFIAEVDKIVKDKEKDILEV.

Belongs to the RRF family.

The protein localises to the cytoplasm. Its function is as follows. Responsible for the release of ribosomes from messenger RNA at the termination of protein biosynthesis. May increase the efficiency of translation by recycling ribosomes from one round of translation to another. The polypeptide is Ribosome-recycling factor (Brevibacillus brevis (strain 47 / JCM 6285 / NBRC 100599)).